The following is a 467-amino-acid chain: A-type ATP synthase subunit B (467 aa).

It belongs to the ATPase alpha/beta chains family. As to quaternary structure, has multiple subunits with at least A(3), B(3), C, D, E, F, H, I and proteolipid K(x).

It is found in the cell membrane. Functionally, component of the A-type ATP synthase that produces ATP from ADP in the presence of a proton gradient across the membrane. The B chain is a regulatory subunit. The chain is A-type ATP synthase subunit B from Methanosphaera stadtmanae (strain ATCC 43021 / DSM 3091 / JCM 11832 / MCB-3).